The primary structure comprises 1127 residues: Elongation factor-like GTPase 1 (1127 aa).

The tr-type G domain maps to Ala17–Tyr272. Residues Ala26–Thr33, Asp92–His96, and Asn146–Asp149 each bind GTP. Residues Lys429–Ser496 form a disordered region. Basic and acidic residues-rich tracts occupy residues Met438 to Lys452 and Ser474 to Glu484. Position 528 is an N6-acetyllysine (Lys528).

Belongs to the TRAFAC class translation factor GTPase superfamily. Classic translation factor GTPase family. As to quaternary structure, associates with the 60S ribosomal subunit. Found in a complex consisting of the 60S ribosomal subunit, SBDS and EFL1.

The catalysed reaction is GTP + H2O = GDP + phosphate + H(+). GTPase activity is stimulated in the presence of 60S ribosome subunits. GTPase involved in the biogenesis of the 60S ribosomal subunit and translational activation of ribosomes. Together with SBDS, triggers the GTP-dependent release of EIF6 from 60S pre-ribosomes in the cytoplasm, thereby activating ribosomes for translation competence by allowing 80S ribosome assembly and facilitating EIF6 recycling to the nucleus, where it is required for 60S rRNA processing and nuclear export. The chain is Elongation factor-like GTPase 1 (Efl1) from Mus musculus (Mouse).